Here is a 213-residue protein sequence, read N- to C-terminus: Pyrrolidone-carboxylate peptidase (213 aa).

Catalysis depends on residues Glu-78, Cys-141, and His-165.

It belongs to the peptidase C15 family. In terms of assembly, homotetramer.

It is found in the cytoplasm. It carries out the reaction Release of an N-terminal pyroglutamyl group from a polypeptide, the second amino acid generally not being Pro.. Its function is as follows. Removes 5-oxoproline from various penultimate amino acid residues except L-proline. In Clostridium perfringens (strain ATCC 13124 / DSM 756 / JCM 1290 / NCIMB 6125 / NCTC 8237 / Type A), this protein is Pyrrolidone-carboxylate peptidase.